The sequence spans 273 residues: Release factor glutamine methyltransferase (273 aa).

Residues Gly-109–Gly-113, Asp-132, Trp-159, and Asn-176 each bind S-adenosyl-L-methionine. Asn-176–Tyr-179 lines the substrate pocket.

It belongs to the protein N5-glutamine methyltransferase family. PrmC subfamily.

It carries out the reaction L-glutaminyl-[peptide chain release factor] + S-adenosyl-L-methionine = N(5)-methyl-L-glutaminyl-[peptide chain release factor] + S-adenosyl-L-homocysteine + H(+). Functionally, methylates the class 1 translation termination release factors RF1/PrfA and RF2/PrfB on the glutamine residue of the universally conserved GGQ motif. The polypeptide is Release factor glutamine methyltransferase (Neisseria gonorrhoeae (strain ATCC 700825 / FA 1090)).